We begin with the raw amino-acid sequence, 155 residues long: 6,7-dimethyl-8-ribityllumazine synthase (155 aa).

5-amino-6-(D-ribitylamino)uracil contacts are provided by residues phenylalanine 24, 58-60, and 82-84; these read AFE and VII. Position 87 to 88 (87 to 88) interacts with (2S)-2-hydroxy-3-oxobutyl phosphate; the sequence is ST. The active-site Proton donor is histidine 90. 5-amino-6-(D-ribitylamino)uracil is bound at residue phenylalanine 115. Arginine 129 is a binding site for (2S)-2-hydroxy-3-oxobutyl phosphate.

It belongs to the DMRL synthase family.

It carries out the reaction (2S)-2-hydroxy-3-oxobutyl phosphate + 5-amino-6-(D-ribitylamino)uracil = 6,7-dimethyl-8-(1-D-ribityl)lumazine + phosphate + 2 H2O + H(+). The protein operates within cofactor biosynthesis; riboflavin biosynthesis; riboflavin from 2-hydroxy-3-oxobutyl phosphate and 5-amino-6-(D-ribitylamino)uracil: step 1/2. In terms of biological role, catalyzes the formation of 6,7-dimethyl-8-ribityllumazine by condensation of 5-amino-6-(D-ribitylamino)uracil with 3,4-dihydroxy-2-butanone 4-phosphate. This is the penultimate step in the biosynthesis of riboflavin. The sequence is that of 6,7-dimethyl-8-ribityllumazine synthase from Chlorobaculum tepidum (strain ATCC 49652 / DSM 12025 / NBRC 103806 / TLS) (Chlorobium tepidum).